Consider the following 1013-residue polypeptide: Trehalose monomycolate exporter MmpL3 (1013 aa).

Topologically, residues 1–14 are cytoplasmic; the sequence is MFAWWGRTVYQFRY. Residues 15–35 traverse the membrane as a helical segment; that stretch reads IVIGVMVALCLGGGVYGISLG. Over 36–196 the chain is Periplasmic; sequence NHVTQSGFYD…KRAEVAAIPL (161 aa). 40-44 contacts a 1,2-diacylglycero-3-phosphoethanolamine; it reads QSGFY. 2 consecutive transmembrane segments (helical) span residues 197 to 217 and 218 to 238; these read VAVV…PAII and GGLA…FTPV. Residues 239-240 are Periplasmic-facing; the sequence is HF. The helical transmembrane segment at 241-261 threads the bilayer; the sequence is FAQPVVTLIGLGIAIDYGLFI. The Cytoplasmic portion of the chain corresponds to 262–290; it reads VSRFREEIAEGYDTEAAVRRTVMTSGRTV. A helical transmembrane segment spans residues 291 to 311; sequence VFSAVIIVASSVPLLLFPQGF. The Periplasmic portion of the chain corresponds to 312–317; the sequence is LKSITY. A helical transmembrane segment spans residues 318-338; that stretch reads AIIASVMLAAILSITVLAAAL. Residues 339–401 lie on the Cytoplasmic side of the membrane; the sequence is AILGPRVDAL…RLVNVVMKRP (63 aa). A helical transmembrane segment spans residues 402–422; sequence IAFAAPILVVMVLLIIPLGQL. The Periplasmic portion of the chain corresponds to 423 to 567; sequence SLGGISEKYL…HSLFDKLPLM (145 aa). The segment at 485-513 is disordered; sequence SGFTDPDNDPEKMWKERPANDSGSKDPSV. Residues 493–512 show a composition bias toward basic and acidic residues; it reads DPEKMWKERPANDSGSKDPS. The chain crosses the membrane as a helical span at residues 568–588; the sequence is ALILIVTTTVLMFLAFGSVVL. Residues 589–591 are Cytoplasmic-facing; that stretch reads PIK. Residues 592 to 612 form a helical membrane-spanning segment; sequence AALMSALTLGSTMGILTWMFV. At 613–630 the chain is on the periplasmic side; that stretch reads DGHGSGLMNYTPQPLMAP. The chain crosses the membrane as a helical span at residues 631–651; the sequence is MIGLIIAVIWGLSTDYEVFLV. Residue aspartate 645 participates in SQ109 binding. Over 652 to 678 the chain is Cytoplasmic; that stretch reads SRMVEARERGMSTAEAIRIGTATTGRL. A helical transmembrane segment spans residues 679-699; that stretch reads ITGAALILAVVAGAFVFSDLV. At 700–703 the chain is on the periplasmic side; that stretch reads MMKY. The helical transmembrane segment at 704–724 threads the bilayer; sequence LAFGLLIALLLDATIIRMFLV. At 725 to 1013 the chain is on the cytoplasmic side; that stretch reads PAVMKLLGDD…QDLLRREGRL (289 aa). The disordered stretch occupies residues 754 to 1013; the sequence is TELPDERKRP…QDLLRREGRL (260 aa). The segment covering 757–772 has biased composition (basic and acidic residues); sequence PDERKRPTVRESETDQ. Pro residues-rich tracts occupy residues 792–803 and 820–829; these read HPAPEPVRPMPP and PPQPPQPPQA. The span at 842 to 867 shows a compositional bias: low complexity; the sequence is RFAMARNAVRNAVNSAVHGGAGSAAA. Pro residues predominate over residues 875–885; it reads PGGPAQPPAPP. Basic and acidic residues predominate over residues 973 to 996; the sequence is REQEPSTEKLNTREDAPEDPETKR.

It belongs to the resistance-nodulation-cell division (RND) (TC 2.A.6) family. MmpL subfamily. As to quaternary structure, monomer. Interacts with TtfA (via N-terminus); active trehalose monomycolate (TMM) biosynthesis is not required for the complex formation. Interacts with MSMEG_5308.

Its subcellular location is the cell inner membrane. The protein resides in the cell septum. It localises to the cell tip. Inhibited by the antimycobacterial compound BM212, a pyrrole derivative. Inhibited by the antitubercular drug SQ109. Inhibited by the adamantyl urea derivative AU1235, the indole carboxamide ICA38 and rimonabant, the antagonist for the cannabinoid receptor CB1. The dissociation constant (Kd) values for SQ109, AU1235, ICA38 and rimonabant are 1.65 uM, 0.29, 0.16 and 29.5, respectively. Inhibitory effects are due to binding of the inhibitors at the proton-transportation channel most likely dissipating the transmembrane electrochemical proton gradient needed for substrate translocation. Transports trehalose monomycolate (TMM) to the cell wall. Flips TMM across the inner membrane. Membrane potential is not required for this function. Transports probably phosphatidylethanolamine (PE) as well. Binds specifically both TMM and PE, but not trehalose dimycolate (TDM). Also binds diacylglycerol (DAG) and other phospholipids, including phosphatidylglycerol (PG), phosphatidylinositol (PI), and cardiolipin (CDL). Contributes to membrane potential, cell wall composition, antibiotic susceptibility and fitness. The polypeptide is Trehalose monomycolate exporter MmpL3 (Mycolicibacterium smegmatis (strain ATCC 700084 / mc(2)155) (Mycobacterium smegmatis)).